The sequence spans 463 residues: Ribosomal protein uS12 methylthiotransferase RimO (463 aa).

The region spanning 15 to 130 is the MTTase N-terminal domain; that stretch reads PKVGFVSLGC…VMQAVHSHLP (116 aa). Residues Cys24, Cys60, Cys89, Cys161, Cys165, and Cys168 each contribute to the [4Fe-4S] cluster site. One can recognise a Radical SAM core domain in the interval 147-392; it reads LTPRHYAYLK…MEVAEQVSAK (246 aa). A TRAM domain is found at 395–463; the sequence is ARKVGKTLKV…ADGHDLWGEV (69 aa).

It belongs to the methylthiotransferase family. RimO subfamily. It depends on [4Fe-4S] cluster as a cofactor.

The protein resides in the cytoplasm. The enzyme catalyses L-aspartate(89)-[ribosomal protein uS12]-hydrogen + (sulfur carrier)-SH + AH2 + 2 S-adenosyl-L-methionine = 3-methylsulfanyl-L-aspartate(89)-[ribosomal protein uS12]-hydrogen + (sulfur carrier)-H + 5'-deoxyadenosine + L-methionine + A + S-adenosyl-L-homocysteine + 2 H(+). Functionally, catalyzes the methylthiolation of an aspartic acid residue of ribosomal protein uS12. The protein is Ribosomal protein uS12 methylthiotransferase RimO of Paraburkholderia phymatum (strain DSM 17167 / CIP 108236 / LMG 21445 / STM815) (Burkholderia phymatum).